The following is a 202-amino-acid chain: Outer-membrane lipoprotein carrier protein (202 aa).

The signal sequence occupies residues 1 to 20 (MKKQLLIGSVLLVASSQVWA).

Belongs to the LolA family. Monomer.

The protein resides in the periplasm. In terms of biological role, participates in the translocation of lipoproteins from the inner membrane to the outer membrane. Only forms a complex with a lipoprotein if the residue after the N-terminal Cys is not an aspartate (The Asp acts as a targeting signal to indicate that the lipoprotein should stay in the inner membrane). The sequence is that of Outer-membrane lipoprotein carrier protein from Aeromonas salmonicida (strain A449).